A 600-amino-acid polypeptide reads, in one-letter code: Lamin-B2 (600 aa).

The head stretch occupies residues 2-27 (SGTPIRGTPGGTPLSPTRISRLQEKE). Residue Ser-16 is modified to Phosphoserine; by CDK1. Residues 25–381 (EKEELRQLND…KLLEGEEERL (357 aa)) form the IF rod domain. Residues 28-64 (ELRQLNDRLAVYIDRVRALELENDRLLVKISEKEEVT) form a coil 1A region. The segment at 75-212 (YESELADARR…NVFEEEIRET (138 aa)) is coil 1B. Positions 237–379 (QALEDLRNQH…YRKLLEGEEE (143 aa)) are coil 2. Disordered regions lie at residues 377–449 (EEER…QMSQ) and 568–600 (ENEE…CLVM). The tail stretch occupies residues 380-600 (RLKLSPSPSS…RTTSRGCLVM (221 aa)). Residues 383-410 (LSPSPSSRVTVSRATSSSSSSSTSLVRS) show a composition bias toward low complexity. Ser-386 carries the phosphoserine modification. The Nuclear localization signal signature appears at 414 to 419 (KRRRIE). In terms of domain architecture, LTD spans 445-562 (FQMSQQASAT…EEVAVRTVTK (118 aa)). The segment covering 569 to 583 (NEEEEDEADFGEEDL) has biased composition (acidic residues). The span at 584-600 (FNQQGDPRTTSRGCLVM) shows a compositional bias: polar residues. Residue Cys-597 is modified to Cysteine methyl ester. Cys-597 carries the S-farnesyl cysteine lipid modification. A propeptide spans 598 to 600 (LVM) (removed in mature form).

The protein belongs to the intermediate filament family. In terms of assembly, homodimer. Lamin dimers then assemble into dimeric head-to-tail polymers. Ultimately, two head-to-tail polymers assemble laterally into a protofilament with a uniformly shaped rod of 3.5 nm in diameter. Post-translationally, phosphorylation plays a key role in lamin organization, subcellular localization and nuclear envelope disintegration. Phosphorylation by CDK1 at Ser-16 at the onset of mitosis drives lamin disassembly and nuclear envelope breakdown.

The protein localises to the nucleus lamina. The protein resides in the nucleus envelope. It localises to the nucleus. It is found in the nucleoplasm. Its subcellular location is the nucleus matrix. Its function is as follows. Lamins are intermediate filament proteins that assemble into a filamentous meshwork, and which constitute the major components of the nuclear lamina, a fibrous layer on the nucleoplasmic side of the inner nuclear membrane. Lamins provide a framework for the nuclear envelope, bridging the nuclear envelope and chromatin. Plays an important role in nuclear assembly, chromatin organization, nuclear membrane and telomere dynamics. This is Lamin-B2 (LMNB2) from Gallus gallus (Chicken).